The primary structure comprises 518 residues: Kelch repeat and BTB domain-containing protein 4 (518 aa).

The 68-residue stretch at Ala45–Ala112 folds into the BTB domain. The 93-residue stretch at Cys147 to His239 folds into the BACK domain. Kelch repeat units lie at residues His239 to Gly285, Asp286 to Gly328, Ala331 to Gly378, Ile380 to Asp430, and Val432 to Asp481.

Component of the BCR(KBTBD4) E3 ubiquitin ligase complex, at least composed of CUL3, KBTBD4 and RBX1.

Functionally, substrate-specific adapter of a BCR (BTB-CUL3-RBX1) E3 ubiquitin ligase complex which targets CoREST corepressor complex components RCOR1, KDM1A/LSD1 and HDAC2 for proteasomal degradation. RCOR1 is likely to be the primary target while degradation of KDM1A and HDAC2 is likely due to their association with RCOR1. Also targets RCOR3, MIER2 and MIER3 for proteasomal degradation as well as associated proteins ZNF217 and RREB1. Degradation is dependent on the presence of an ELM2 domain in the target proteins. This Pongo abelii (Sumatran orangutan) protein is Kelch repeat and BTB domain-containing protein 4 (KBTBD4).